Reading from the N-terminus, the 238-residue chain is uncharacterized protein (238 aa).

2 disordered regions span residues 123-167 (FRQG…VHGG) and 180-238 (SAMG…AKRR). A compositionally biased stretch (low complexity) spans 152 to 161 (SGHSPSPGRH). A compositionally biased stretch (basic residues) spans 207–238 (HRGHGHRFRLLAPRSRPRQRRGGGSRAAAKRR).

It belongs to the PNP/MTAP phosphorylase family.

This is an uncharacterized protein from Rhodospirillum rubrum.